Here is a 923-residue protein sequence, read N- to C-terminus: MLEDEYQIDFFSDNGFVRKQCPTCGNFFWTRDIERSTCGDAPCDPYSFIGNPVFKKELELPDMREFYLNFFEEQGHTRIERYPVIARWRDDIYLTIASIADFQPFVTSGQVPPPANPLTISQPCIRLSDLDAVGKSGRHLTTFEMMAHHAFNTKNEEIYWKEHTLELCDGLLNSLGADPMAVTYKEEPWAGGGNAGACVEVLIGGLEVATLVFMNLKKDKNGDIDIKGDMYSKMENYIVDTGYGLERLVWASKGSPTIYDAIFPSIVNELMGLAGIEHELENNEYSHILSQNARLAGLMDISEKANLLELRKQVAASIGITADKLSSIMEPVENVYAIADHTRCLTFMIGDGIIPSNVKAGYLARLVIRRTLRMMKDLGIMIPISEIIQMHINNLPEYPEFQKRFDVIKDILEHEERKFAETLERGRRMMEKSARHYKESGEKMPLETIIDMYDSHGIPPEISKAVASDVGVEVDLPDNFYSLVADKHSQSEEKEEKVVPFADKIARLPKTKRLFYDEPNRMDFDAVVLEVFDNHIVLDNTLMYPEGGGQPADHGTLTVEDVVLKVVDTQMYDGVVVHTINEIEDELHIRKGDMVVGRVNEKRRMAHARHHTATHIINDAAREVLGSHIWQTGAQKFADRARLDISHYKRITQEEANQIEIIANHTVMKNKRIISDWMDRTEAEQKYGFRLYQGGVPPGKMIRVLQVGNDIEACAGTHCTNTGLVGPIKILKTERIQDGVERLEYAAGEAAIIAMQDIETLVRDSSETLRVSAEQLPSTIERFFDEWKELKKENNKLKEELAHSRVSQLVNDAEDVNGIRIITKAIPHADSEELTKTAGELTQESNVVAILISEMDGVKIVATAGDDAVKRGVNVGAIVKEMSTMVGGGGGGRPNMARGGGTDPSGMDNALSRSVELLKEQLN.

Residues His-611, His-615, Cys-714, and His-718 each coordinate Zn(2+). Over residues 886-903 the composition is skewed to gly residues; it reads VGGGGGGRPNMARGGGTD. The segment at 886–909 is disordered; sequence VGGGGGGRPNMARGGGTDPSGMDN.

It belongs to the class-II aminoacyl-tRNA synthetase family. The cofactor is Zn(2+).

The protein localises to the cytoplasm. The enzyme catalyses tRNA(Ala) + L-alanine + ATP = L-alanyl-tRNA(Ala) + AMP + diphosphate. Its function is as follows. Catalyzes the attachment of alanine to tRNA(Ala) in a two-step reaction: alanine is first activated by ATP to form Ala-AMP and then transferred to the acceptor end of tRNA(Ala). Also edits incorrectly charged Ser-tRNA(Ala) and Gly-tRNA(Ala) via its editing domain. The chain is Alanine--tRNA ligase from Methanococcoides burtonii (strain DSM 6242 / NBRC 107633 / OCM 468 / ACE-M).